The sequence spans 251 residues: YlmG homolog protein 2, chloroplastic (251 aa).

A chloroplast-targeting transit peptide spans 1 to 51 (MEASANEPAMKSLKSNPSGPIPNFFVSLSSAFTQTPLVRSNKPNLLLLPPV). 2 helical membrane-spanning segments follow: residues 119–139 (GFAA…NGLI) and 183–203 (FIPP…VLNA). Positions 232–243 (VRRRRLSSHKDH) are enriched in basic residues. The tract at residues 232-251 (VRRRRLSSHKDHRPSSASMT) is disordered.

The protein belongs to the YggT family.

The protein localises to the plastid. It localises to the chloroplast thylakoid membrane. Functionally, not required for the biogenesis and accumulation of native cytochrome b6 in the thylakoid membrane. Not functionally involved in the pathway for covalent binding of the c-type heme to cytochrome b6. The sequence is that of YlmG homolog protein 2, chloroplastic from Arabidopsis thaliana (Mouse-ear cress).